The primary structure comprises 396 residues: NADH-quinone oxidoreductase subunit D (396 aa).

This sequence belongs to the complex I 49 kDa subunit family. In terms of assembly, NDH-1 is composed of 14 different subunits. Subunits NuoB, C, D, E, F, and G constitute the peripheral sector of the complex.

The protein resides in the cell inner membrane. It carries out the reaction a quinone + NADH + 5 H(+)(in) = a quinol + NAD(+) + 4 H(+)(out). Functionally, NDH-1 shuttles electrons from NADH, via FMN and iron-sulfur (Fe-S) centers, to quinones in the respiratory chain. The immediate electron acceptor for the enzyme in this species is believed to be ubiquinone. Couples the redox reaction to proton translocation (for every two electrons transferred, four hydrogen ions are translocated across the cytoplasmic membrane), and thus conserves the redox energy in a proton gradient. This Mesorhizobium japonicum (strain LMG 29417 / CECT 9101 / MAFF 303099) (Mesorhizobium loti (strain MAFF 303099)) protein is NADH-quinone oxidoreductase subunit D.